Consider the following 159-residue polypeptide: D-aminoacyl-tRNA deacylase (159 aa).

A Gly-cisPro motif, important for rejection of L-amino acids motif is present at residues 146-147 (GP).

It belongs to the DTD family. In terms of assembly, homodimer.

Its subcellular location is the cytoplasm. It catalyses the reaction glycyl-tRNA(Ala) + H2O = tRNA(Ala) + glycine + H(+). It carries out the reaction a D-aminoacyl-tRNA + H2O = a tRNA + a D-alpha-amino acid + H(+). Its function is as follows. An aminoacyl-tRNA editing enzyme that deacylates mischarged D-aminoacyl-tRNAs. Also deacylates mischarged glycyl-tRNA(Ala), protecting cells against glycine mischarging by AlaRS. Acts via tRNA-based rather than protein-based catalysis; rejects L-amino acids rather than detecting D-amino acids in the active site. By recycling D-aminoacyl-tRNA to D-amino acids and free tRNA molecules, this enzyme counteracts the toxicity associated with the formation of D-aminoacyl-tRNA entities in vivo and helps enforce protein L-homochirality. The sequence is that of D-aminoacyl-tRNA deacylase from Bifidobacterium adolescentis (strain ATCC 15703 / DSM 20083 / NCTC 11814 / E194a).